The following is a 2851-amino-acid chain: Highly reducing polyketide synthase sthA (2851 aa).

The region spanning 8–415 (NEPIVIIGSG…GTNAHAIVEG (408 aa)) is the Ketosynthase family 3 (KS3) domain. The disordered stretch occupies residues 304–324 (LDPESPNDRPQYIESHGTGTP). Residues 529-851 (IFTGQGAQYA…PYHGSLVRGE (323 aa)) form an acyl transferase (AT) domain region. The tract at residues 926–1059 (HQLLGNVSPD…GELNILLVDD (134 aa)) is N-terminal hotdog fold. Residues 926-1235 (HQLLGNVSPD…FKPVGSDAKD (310 aa)) form the PKS/mFAS DH domain. A dehydratase (DH) domain region spans residues 949-1242 (PKEMTWLEGH…AKDDRNVFYK (294 aa)). H958 (proton acceptor; for dehydratase activity) is an active-site residue. A C-terminal hotdog fold region spans residues 1076–1235 (MIPVQPSRLY…FKPVGSDAKD (160 aa)). Catalysis depends on D1137, which acts as the Proton donor; for dehydratase activity. The tract at residues 1390 to 1577 (QCTLWVAGVL…GIDTMSPPEL (188 aa)) is methyltransferase (MT) domain. The interval 2079-2252 (TYWLVGLSGA…RSSVVNVGAI (174 aa)) is ketoreductase (KR)domain. The Carrier domain maps to 2360–2443 (ADITKVVQQA…DLAAESIPAE (84 aa)). The residue at position 2399 (S2399) is an O-(pantetheine 4'-phosphoryl)serine. The segment at 2447–2496 (HVQQQQQQAGRQDASSNTSSDDETASTLPTSPESASPGTSTPVPEKDISP) is disordered. Residues 2455–2488 (AGRQDASSNTSSDDETASTLPTSPESASPGTSTP) are compositionally biased toward polar residues. Positions 2535–2767 (LTGCSGLLGH…DLVSVDTCCS (233 aa)) are reductase (R) domain.

It depends on pantetheine 4'-phosphate as a cofactor.

The enzyme catalyses 7 malonyl-CoA + acetyl-CoA + 10 AH2 + 5 S-adenosyl-L-methionine + 2 H(+) = dehydroprobetaenone I + 10 A + 5 S-adenosyl-L-homocysteine + 7 CO2 + 8 CoA + 6 H2O. The protein operates within mycotoxin biosynthesis. In terms of biological role, highly reducing polyketide synthase; part of the gene cluster that mediates the biosynthesis of the phytotoxin stemphyloxin II. The first step of the pathway is the synthesis of dehydroprobetaenone I by the polyketide synthase sthA and the enoyl reductase sthE via condensation of one acetyl-CoA starter unit with 7 malonyl-CoA units and 5 methylations. The C-terminal reductase (R) domain of sthA catalyzes the reductive release of the polyketide chain. Because sthA lacks a designated enoylreductase (ER) domain, the required activity is provided the enoyl reductase sthE. The short-chain dehydrogenase/reductase sthC then catalyzes reduction of dehydroprobetaenone I to probetaenone I. The cytochrome P450 monooxygenase sthF catalyzes successive epoxidation, oxidation (resulting from epoxide opening) and hydroxylation to install a tertiary alcohol in the decaline ring to yield betaenone C from dehydroprobetaenone I and betaenone B from probetaenone I. The FAD-linked oxidoreductase sthB is responsible for the conversion of betaenone C to betaenone A via an intramolecular aldol reaction between C-1 and C-17 to form the bridged tricyclic system in betaenone A. Finally, the cytochrome P450 monooxygenase sthD catalyzes the hydroxylation of C-15 to afford the final metabolite stemphyloxin II. The sequence is that of Highly reducing polyketide synthase sthA from Phaeosphaeria nodorum (strain SN15 / ATCC MYA-4574 / FGSC 10173) (Glume blotch fungus).